Here is a 262-residue protein sequence, read N- to C-terminus: 3-methyl-2-oxobutanoate hydroxymethyltransferase (262 aa).

The Mg(2+) site is built by Asp42 and Asp81. 3-methyl-2-oxobutanoate-binding positions include 42–43, Asp81, and Lys110; that span reads DS. A Mg(2+)-binding site is contributed by Glu112. The active-site Proton acceptor is Glu180.

This sequence belongs to the PanB family. In terms of assembly, homodecamer; pentamer of dimers. Requires Mg(2+) as cofactor.

It localises to the cytoplasm. The catalysed reaction is 3-methyl-2-oxobutanoate + (6R)-5,10-methylene-5,6,7,8-tetrahydrofolate + H2O = 2-dehydropantoate + (6S)-5,6,7,8-tetrahydrofolate. It participates in cofactor biosynthesis; (R)-pantothenate biosynthesis; (R)-pantoate from 3-methyl-2-oxobutanoate: step 1/2. Functionally, catalyzes the reversible reaction in which hydroxymethyl group from 5,10-methylenetetrahydrofolate is transferred onto alpha-ketoisovalerate to form ketopantoate. This is 3-methyl-2-oxobutanoate hydroxymethyltransferase from Legionella pneumophila subsp. pneumophila (strain Philadelphia 1 / ATCC 33152 / DSM 7513).